The following is a 383-amino-acid chain: Paralemmin-1 (383 aa).

M1 carries the N-acetylmethionine modification. Residues D7–G101 adopt a coiled-coil conformation. Disordered regions lie at residues R51 to M164, T242 to Q293, and S333 to K374. Basic and acidic residues predominate over residues D69 to D96. Phosphoserine occurs at positions 116, 122, and 124. Residues E133–L143 are compositionally biased toward polar residues. 3 positions are modified to phosphothreonine: T141, T145, and T153. S157 and S161 each carry phosphoserine. T242 carries the phosphothreonine modification. Residue S244 is modified to Phosphoserine. Residues G257–T273 are compositionally biased toward basic and acidic residues. Position 345 is a phosphoserine (S345). Polar residues predominate over residues Q357–T367. Phosphothreonine occurs at positions 361, 362, and 363. S365 carries the post-translational modification Phosphoserine. Phosphothreonine is present on T367. S-palmitoyl cysteine attachment occurs at residues C377 and C379. C380 is modified (cysteine methyl ester). C380 is lipidated: S-farnesyl cysteine. A propeptide spans S381–M383 (removed in mature form).

It belongs to the paralemmin family. As to quaternary structure, interacts with dopamine receptor DRD3. As to expression, expressed in neurons cells of neuropil-rich areas of the brain, in the Purkinje cells of the cerebellum, in cells of the cerebral cortex, hippocampus, brainstem nuclei and glial processes and sheaths. Expressed in the medulla of the adrenal chromaffin cells and renal duct cells (at protein level).

The protein localises to the cell membrane. It is found in the cell projection. The protein resides in the filopodium membrane. It localises to the axon. Its subcellular location is the dendrite. The protein localises to the dendritic spine. It is found in the basolateral cell membrane. The protein resides in the apicolateral cell membrane. Functionally, involved in plasma membrane dynamics and cell process formation. Necessary for axonal and dendritic filopodia induction, for dendritic spine maturation and synapse formation in a palmitoylation-dependent manner. This is Paralemmin-1 (Palm) from Rattus norvegicus (Rat).